The following is a 496-amino-acid chain: Beta-amylase (496 aa).

Residues Asp54, His94, and Asp102 each contribute to the substrate site. The active-site Proton donor is the Glu187. Residues Lys296, His301, and Thr343 each coordinate substrate. The Proton acceptor role is filled by Glu381. Substrate is bound by residues 382–383 (NA) and Arg421.

The protein belongs to the glycosyl hydrolase 14 family.

The catalysed reaction is Hydrolysis of (1-&gt;4)-alpha-D-glucosidic linkages in polysaccharides so as to remove successive maltose units from the non-reducing ends of the chains.. The protein is Beta-amylase (BMY1) of Trifolium repens (Creeping white clover).